The primary structure comprises 151 residues: Caveolin-3 (151 aa).

Over 1–83 the chain is Cytoplasmic; sequence MMAEERTDLE…RLLSTLLGVP (83 aa). A Glycyl lysine isopeptide (Lys-Gly) (interchain with G-Cter in SUMO3) cross-link involves residue lysine 38. The tract at residues 64–114 is required for interaction with DAG1; sequence TFTVSKYWCYRLLSTLLGVPLALLWGFLFACISFCHIWAVVPCIKSYLIEI. An intramembrane region (helical) is located at residues 84 to 104; sequence LALLWGFLFACISFCHIWAVV. At 105–151 the chain is on the cytoplasmic side; it reads PCIKSYLIEIQCISHIYSLCIRTFCNPVFAALGQVCSNIKVMLRKEV.

The protein belongs to the caveolin family. In terms of assembly, homooligomer. Interacts with DYSF. Interacts with DLG1 and KCNA5; forms a ternary complex. Interacts with DAG1 (via its C-terminal); the interaction prevents binding of DAG1 with DMD. Interacts with TRIM72. Interacts with MUSK; may regulate MUSK signaling. Interacts with POPDC1. Interacts with CAVIN1, CAVIN2 and CAVIN4. Sumoylation with SUMO3 by PIAS4 may reduce agonist-induced internalization and desensitization of adrenergic receptor ABRD2. Expressed specifically in skeletal muscle and heart.

The protein resides in the golgi apparatus membrane. It is found in the cell membrane. Its subcellular location is the membrane. It localises to the caveola. The protein localises to the sarcolemma. May act as a scaffolding protein within caveolar membranes. Interacts directly with G-protein alpha subunits and can functionally regulate their activity. May also regulate voltage-gated potassium channels. Plays a role in the sarcolemma repair mechanism of both skeletal muscle and cardiomyocytes that permits rapid resealing of membranes disrupted by mechanical stress. Mediates the recruitment of CAVIN2 and CAVIN3 proteins to the caveolae. The polypeptide is Caveolin-3 (CAV3) (Sus scrofa (Pig)).